The primary structure comprises 367 residues: Cytochrome-c peroxidase IdrP2 (367 aa).

The N-terminal stretch at 1–28 (MTTHQSIRRLSRIAALVGLAFVAGTVAA) is a signal peptide. 2 Cytochrome c domains span residues 47–157 (DMVE…AMWQ) and 200–345 (SQQK…EALS). Positions 69, 72, 73, 215, 218, and 219 each coordinate heme c.

The iodate reductase (Idr) complex is composed of a molybdopterin-dependent iodate reductase (IdrA and IdrB subunits) and two associated peroxidases (IdrP1 and IdrP2). Heme c serves as cofactor.

It localises to the periplasm. It carries out the reaction 2 Fe(II)-[cytochrome c] + H2O2 + 2 H(+) = 2 Fe(III)-[cytochrome c] + 2 H2O. Its function is as follows. Involved in iodate respiration. May play a critical role in detoxification of inadvertent H(2)O(2) generated by the iodate reductase IdrA/IdrB. The sequence is that of Cytochrome-c peroxidase IdrP2 from Denitromonas iodatirespirans.